A 202-amino-acid chain; its full sequence is Probable septum site-determining protein MinC (202 aa).

This sequence belongs to the MinC family. In terms of assembly, interacts with MinD and FtsZ.

Cell division inhibitor that blocks the formation of polar Z ring septums. Rapidly oscillates between the poles of the cell to destabilize FtsZ filaments that have formed before they mature into polar Z rings. Prevents FtsZ polymerization. The polypeptide is Probable septum site-determining protein MinC (Sulfurihydrogenibium sp. (strain YO3AOP1)).